We begin with the raw amino-acid sequence, 501 residues long: Growth/differentiation factor 5 (501 aa).

Residues 1–27 form the signal peptide; the sequence is MRLPKLLTFLLWYLAWLDLEFICTVLG. Residues 28 to 381 constitute a propeptide that is removed on maturation; the sequence is APDLGQRPQG…YLFSQRRKRR (354 aa). Residues 29–169 form a disordered region; the sequence is PDLGQRPQGT…EPFRPPPITP (141 aa). Residues 99–111 are compositionally biased toward pro residues; sequence PRPGGPEPKPGHP. A compositionally biased stretch (basic and acidic residues) spans 148–162; it reads KAREPGPPREPKEPF. Asn189 is a glycosylation site (N-linked (GlcNAc...) asparagine). Residues 246-265 form a disordered region; that stretch reads PSDTAKPAAPGGGRAAQLKL. 3 disulfide bridges follow: Cys400–Cys466, Cys429–Cys498, and Cys433–Cys500.

It belongs to the TGF-beta family. In terms of assembly, homodimer; disulfide-linked. Interacts with serine proteases, HTRA1 and HTRA3. Following LPS binding, may form a complex with CXCR4, HSP90AA1 and HSPA8. Interacts with high affinity with NOG; inhibits chondrogenesis. Interacts with high affinity with BMPR1B and lower affinity with BMPR1A; positively regulates chondrocyte differentiation and induces SMAD dependent signaling. Interacts with FBN1 (via N-terminal domain) and FBN2. Interacts with TGFBR3. As to expression, predominantly expressed in long bones during embryonic development. Expressed in monocytes (at protein level).

The protein resides in the secreted. The protein localises to the cell membrane. Functionally, growth factor involved in bone and cartilage formation. During cartilage development regulates differentiation of chondrogenic tissue through two pathways. Firstly, positively regulates differentiation of chondrogenic tissue through its binding of high affinity with BMPR1B and of less affinity with BMPR1A, leading to induction of SMAD1-SMAD5-SMAD8 complex phosphorylation and then SMAD protein signaling transduction. Secondly, negatively regulates chondrogenic differentiation through its interaction with NOG. Required to prevent excessive muscle loss upon denervation. This function requires SMAD4 and is mediated by phosphorylated SMAD1/5/8. Binds bacterial lipopolysaccharide (LPS) and mediates LPS-induced inflammatory response, including TNF secretion by monocytes. The protein is Growth/differentiation factor 5 (GDF5) of Homo sapiens (Human).